Reading from the N-terminus, the 243-residue chain is MGHKIHPNGLRLGITQEHRSRWYASSKTYPTLLQEDDRIRGFIQKKYASAGISDVLIARKADQLEVELKTARPGVIVGRQGSGIEELRSGIQKTIGDRSRQVRINVVEIERVDADAHLLAEYIAQQLEKRVAFRRTIRMAVQRAQRAGVLGLKIQVGGRLNGAEIARSEWTREGRVPLHTLRAEIDYANKTANTTYGVLGIKVWVFKGEVLSKEDQPLPVGASPRRKGSRRPQQFEDRSNDGK.

The KH type-2 domain maps to 39–110 (IRGFIQKKYA…QVRINVVEIE (72 aa)). The tract at residues 215-243 (DQPLPVGASPRRKGSRRPQQFEDRSNDGK) is disordered. A compositionally biased stretch (basic and acidic residues) spans 233–243 (QQFEDRSNDGK).

The protein belongs to the universal ribosomal protein uS3 family. Part of the 30S ribosomal subunit. Forms a tight complex with proteins S10 and S14.

Functionally, binds the lower part of the 30S subunit head. Binds mRNA in the 70S ribosome, positioning it for translation. This Prochlorococcus marinus (strain MIT 9211) protein is Small ribosomal subunit protein uS3.